A 102-amino-acid chain; its full sequence is Gastrin/cholecystokinin-like peptide (102 aa).

The N-terminal stretch at 1–20 (MDKKVCVSILLAMLAIAALC) is a signal peptide. Positions 21–45 (RPMTELESARHGAQRKNSISDVSRR) are excised as a propeptide. Tyr86 carries the sulfotyrosine modification. Phe92 is modified (phenylalanine amide). A propeptide spanning residues 96-102 (SSEVTES) is cleaved from the precursor.

This sequence belongs to the gastrin/cholecystokinin family. As to expression, expressed in antrum, duodenum, colon, pancreas, brain and testis. No expression found in kidney, lung, liver, skin or distal two-thirds of small intestine. In the brain, strongly expressed in the pituitary gland with moderate expression in the neural lobe, brain stem and hypothalamus.

It is found in the secreted. Its function is as follows. May control digestion processes. In Aquarana catesbeiana (American bullfrog), this protein is Gastrin/cholecystokinin-like peptide (GAST).